Reading from the N-terminus, the 187-residue chain is Shikimate kinase (187 aa).

19–24 (GSGKST) lines the ATP pocket. S23 contacts Mg(2+). Positions 41, 65, and 87 each coordinate substrate. ATP is bound at residue R124. Substrate is bound at residue R143. R160 is a binding site for ATP.

The protein belongs to the shikimate kinase family. As to quaternary structure, monomer. Mg(2+) serves as cofactor.

The protein localises to the cytoplasm. It carries out the reaction shikimate + ATP = 3-phosphoshikimate + ADP + H(+). Its pathway is metabolic intermediate biosynthesis; chorismate biosynthesis; chorismate from D-erythrose 4-phosphate and phosphoenolpyruvate: step 5/7. Catalyzes the specific phosphorylation of the 3-hydroxyl group of shikimic acid using ATP as a cosubstrate. The sequence is that of Shikimate kinase from Rippkaea orientalis (strain PCC 8801 / RF-1) (Cyanothece sp. (strain PCC 8801)).